The chain runs to 206 residues: Orotate phosphoribosyltransferase (206 aa).

5-phospho-alpha-D-ribose 1-diphosphate is bound by residues arginine 97, lysine 98, lysine 101, and 125–133 (NDVIASGRS). Arginine 157 is a binding site for orotate.

The protein belongs to the purine/pyrimidine phosphoribosyltransferase family. PyrE subfamily. As to quaternary structure, homodimer. It depends on Mg(2+) as a cofactor.

The enzyme catalyses orotidine 5'-phosphate + diphosphate = orotate + 5-phospho-alpha-D-ribose 1-diphosphate. It participates in pyrimidine metabolism; UMP biosynthesis via de novo pathway; UMP from orotate: step 1/2. In terms of biological role, catalyzes the transfer of a ribosyl phosphate group from 5-phosphoribose 1-diphosphate to orotate, leading to the formation of orotidine monophosphate (OMP). The protein is Orotate phosphoribosyltransferase of Chlamydia caviae (strain ATCC VR-813 / DSM 19441 / 03DC25 / GPIC) (Chlamydophila caviae).